We begin with the raw amino-acid sequence, 93 residues long: Conotoxin F_Vc1 (93 aa).

The first 22 residues, 1 to 22, serve as a signal peptide directing secretion; the sequence is MQRGAVLLGVVAFLALWPQAGA. A propeptide spanning residues 23-33 is cleaved from the precursor; it reads EPYNLNDPDVR.

It belongs to the conotoxin F superfamily. Contains 4 disulfide bonds. Expressed by the venom duct.

It is found in the secreted. The protein is Conotoxin F_Vc1 of Conus victoriae (Queen Victoria cone).